Reading from the N-terminus, the 661-residue chain is tRNA uridine 5-carboxymethylaminomethyl modification enzyme MnmG (661 aa).

FAD contacts are provided by residues 16-21, Val128, and Ser183; that span reads GAGHAG. Residues 206 to 230 form a disordered region; the sequence is PRVNGNTIDYSKTEEEPGDKTPRHF. Residues 216–230 are compositionally biased toward basic and acidic residues; that stretch reads SKTEEEPGDKTPRHF. Residue 277–291 coordinates NAD(+); that stretch reads GPRYCPSIEDKVVRF. Residue Gln374 participates in FAD binding.

This sequence belongs to the MnmG family. In terms of assembly, homodimer. Heterotetramer of two MnmE and two MnmG subunits. FAD serves as cofactor.

Its subcellular location is the cytoplasm. Functionally, NAD-binding protein involved in the addition of a carboxymethylaminomethyl (cmnm) group at the wobble position (U34) of certain tRNAs, forming tRNA-cmnm(5)s(2)U34. The polypeptide is tRNA uridine 5-carboxymethylaminomethyl modification enzyme MnmG (Lactobacillus helveticus (strain DPC 4571)).